The primary structure comprises 197 residues: Dephospho-CoA kinase (197 aa).

The region spanning 2–197 (IVGLTGGIAS…YQQILSLNAA (196 aa)) is the DPCK domain. 10 to 15 (ASGKTL) contributes to the ATP binding site.

The protein belongs to the CoaE family.

It localises to the cytoplasm. It carries out the reaction 3'-dephospho-CoA + ATP = ADP + CoA + H(+). It functions in the pathway cofactor biosynthesis; coenzyme A biosynthesis; CoA from (R)-pantothenate: step 5/5. Its function is as follows. Catalyzes the phosphorylation of the 3'-hydroxyl group of dephosphocoenzyme A to form coenzyme A. The protein is Dephospho-CoA kinase of Dichelobacter nodosus (Bacteroides nodosus).